The following is a 199-amino-acid chain: MEPFVSRIYFGDLLAGTDEAGRGPLAGEVVAAAVILDPAQPITGLADSKKLSEKKREALFVEIQEKALAYGIARATIEEIDELNILHASMLAMSRAVALLSIEPEYVLVDGNRIPPNLPCSAEAVVKGDARHAAISAASILAKVTRDRDIVQVAQIYPEYGFEKHKGYPTALHLEAIRLHGITPIHRRSFGPVKKILEG.

Positions 12–199 (DLLAGTDEAG…FGPVKKILEG (188 aa)) constitute an RNase H type-2 domain. Aspartate 18, glutamate 19, and aspartate 110 together coordinate a divalent metal cation.

It belongs to the RNase HII family. The cofactor is Mn(2+). Mg(2+) is required as a cofactor.

The protein resides in the cytoplasm. The enzyme catalyses Endonucleolytic cleavage to 5'-phosphomonoester.. Its function is as follows. Endonuclease that specifically degrades the RNA of RNA-DNA hybrids. The polypeptide is Ribonuclease HII (Marinomonas sp. (strain MWYL1)).